Consider the following 522-residue polypeptide: Amine oxidase [flavin-containing] (522 aa).

Topologically, residues 1–492 are cytoplasmic; that stretch reads MTANAYDVIV…WERNLPSVGG (492 aa). Cys398 carries the S-8alpha-FAD cysteine modification. The helical; Anchor for type IV membrane protein transmembrane segment at 493 to 513 threads the bilayer; it reads FLKFMGVSSFLAAATAAGLVA. At 514–522 the chain is on the mitochondrial intermembrane side; sequence CKKGLLPRC.

This sequence belongs to the flavin monoamine oxidase family. As to quaternary structure, monomer, homo- or heterodimer (containing two subunits of similar size). Each subunit contains a covalently bound flavin. Enzymatically active as monomer. The cofactor is FAD. Strongest expression in brain and intestine, followed by liver, heart and gill. Little expression in spleen, eye or muscle. In brain, highest activity in noradrenergic and serotonergic cell groups and those of the habenulointerpeduncular pathway; moderate levels in dopaminergic cell clusters.

It localises to the mitochondrion outer membrane. It catalyses the reaction a secondary aliphatic amine + O2 + H2O = a primary amine + an aldehyde + H2O2. It carries out the reaction a primary methyl amine + O2 + H2O = an aldehyde + H2O2 + NH4(+). The catalysed reaction is serotonin + O2 + H2O = (5-hydroxyindol-3-yl)acetaldehyde + H2O2 + NH4(+). The enzyme catalyses 2-phenylethylamine + O2 + H2O = 2-phenylacetaldehyde + H2O2 + NH4(+). It catalyses the reaction tyramine + O2 + H2O = (4-hydroxyphenyl)acetaldehyde + H2O2 + NH4(+). It carries out the reaction dopamine + O2 + H2O = 3,4-dihydroxyphenylacetaldehyde + H2O2 + NH4(+). The catalysed reaction is (R)-adrenaline + O2 + H2O = (R)-3,4-dihydroxymandelaldehyde + methylamine + H2O2. The enzyme catalyses (R)-noradrenaline + O2 + H2O = (R)-3,4-dihydroxymandelaldehyde + H2O2 + NH4(+). It catalyses the reaction kynuramine + O2 + H2O = 3-(2-aminophenyl)-3-oxopropanal + H2O2 + NH4(+). It carries out the reaction tryptamine + O2 + H2O = indole-3-acetaldehyde + H2O2 + NH4(+). Inhibited by both clorgyline (selective MAOA inhibitor) and deprenyl (selective MAOB inhibitor). Catalyzes the oxidative deamination of biogenic and xenobiotic amines and has important functions in the metabolism of neuroactive and vasoactive amines in the central nervous system and peripheral tissues. Preferentially oxidizes serotonin and tyramine. Also catalyzes the oxidative deamination of kynuramine to 3-(2-aminophenyl)-3-oxopropanal that can spontaneously condense to 4-hydroxyquinoline. This is Amine oxidase [flavin-containing] from Danio rerio (Zebrafish).